Consider the following 125-residue polypeptide: Acidic phospholipase A2 5 (125 aa).

A signal peptide is located at residue Ser1. A propeptide spanning residues 2–7 (NRPMPL) is cleaved from the precursor. 8 disulfide bridges follow: Cys18-Cys77, Cys33-Cys124, Cys35-Cys50, Cys37-Cys54, Cys49-Cys105, Cys56-Cys98, Cys66-Cys91, and Cys84-Cys96. Phe28 lines the N-acetyl-beta-D-glucosamine pocket. Residue Asp30 coordinates Zn(2+). The Ca(2+) site is built by Tyr34 and Gly36. The N-acetyl-beta-D-glucosamine site is built by His53 and Lys69. His53 is an active-site residue. Glu76 provides a ligand contact to Zn(2+). Residue Asp99 is part of the active site. Asn117 is a binding site for Zn(2+).

In terms of assembly, heterodimer formed between isoform 5 and isoform 6 in presence of zinc ion and monomer in absence of zinc ion. It depends on Ca(2+) as a cofactor. As to expression, expressed by the venom gland.

The protein localises to the secreted. It catalyses the reaction a 1,2-diacyl-sn-glycero-3-phosphocholine + H2O = a 1-acyl-sn-glycero-3-phosphocholine + a fatty acid + H(+). Functionally, PLA2 catalyzes the calcium-dependent hydrolysis of the 2-acyl groups in 3-sn-phosphoglycerides. The chain is Acidic phospholipase A2 5 from Naja sagittifera (Andaman cobra).